We begin with the raw amino-acid sequence, 247 residues long: Small ribosomal subunit protein uS3 (247 aa).

Residues 18-87 (IDEYLAKRFY…NPQITVRRVE (70 aa)) enclose the KH type-2 domain. Residues 226 to 247 (QQGEVVGEAPNTPLEEQGQKQG) form a disordered region.

The protein belongs to the universal ribosomal protein uS3 family. As to quaternary structure, part of the 30S ribosomal subunit.

In terms of biological role, binds the lower part of the 30S subunit head. This is Small ribosomal subunit protein uS3 from Hyperthermus butylicus (strain DSM 5456 / JCM 9403 / PLM1-5).